Consider the following 109-residue polypeptide: ATP-dependent Clp protease adapter protein ClpS (109 aa).

A disordered region spans residues 1–20 (MAERKQGGQGNGVGSSVVTE).

This sequence belongs to the ClpS family. Binds to the N-terminal domain of the chaperone ClpA.

Its function is as follows. Involved in the modulation of the specificity of the ClpAP-mediated ATP-dependent protein degradation. The chain is ATP-dependent Clp protease adapter protein ClpS from Caulobacter vibrioides (strain NA1000 / CB15N) (Caulobacter crescentus).